Here is a 458-residue protein sequence, read N- to C-terminus: Sugar transporter ERD6-like 10 (458 aa).

A run of 12 helical transmembrane segments spans residues 17 to 37 (ITAC…SYGC), 66 to 86 (FLNL…VILG), 96 to 116 (LFCI…WLDL), 119 to 139 (ISLG…IAEI), 150 to 170 (ASTL…GTVI), 174 to 194 (VLAV…YFIP), 257 to 277 (LVVG…GITY), 292 to 312 (LGSM…LILV), 319 to 339 (PLLL…GVSF), 350 to 370 (FIPV…AIGI), 393 to 413 (IVAL…NFMF), and 419 to 439 (GTFY…WMLV).

This sequence belongs to the major facilitator superfamily. Sugar transporter (TC 2.A.1.1) family.

It localises to the membrane. Sugar transporter. The protein is Sugar transporter ERD6-like 10 of Arabidopsis thaliana (Mouse-ear cress).